We begin with the raw amino-acid sequence, 422 residues long: Tyrosine--tRNA ligase (422 aa).

Tyr-35 contributes to the L-tyrosine binding site. Residues 40-49 carry the 'HIGH' region motif; sequence PTAPSLHLGN. L-tyrosine is bound by residues Tyr-170 and Gln-174. Residues 231–235 carry the 'KMSKS' region motif; sequence KFGKT. Lys-234 is a binding site for ATP. Residues 353-419 form the S4 RNA-binding domain; it reads APVVDLFAEV…GKKNLAAVEV (67 aa).

The protein belongs to the class-I aminoacyl-tRNA synthetase family. TyrS type 1 subfamily. In terms of assembly, homodimer.

It localises to the cytoplasm. It carries out the reaction tRNA(Tyr) + L-tyrosine + ATP = L-tyrosyl-tRNA(Tyr) + AMP + diphosphate + H(+). Catalyzes the attachment of tyrosine to tRNA(Tyr) in a two-step reaction: tyrosine is first activated by ATP to form Tyr-AMP and then transferred to the acceptor end of tRNA(Tyr). The polypeptide is Tyrosine--tRNA ligase (Streptomyces avermitilis (strain ATCC 31267 / DSM 46492 / JCM 5070 / NBRC 14893 / NCIMB 12804 / NRRL 8165 / MA-4680)).